A 59-amino-acid chain; its full sequence is Large ribosomal subunit protein uL30 (59 aa).

Belongs to the universal ribosomal protein uL30 family. Part of the 50S ribosomal subunit.

This is Large ribosomal subunit protein uL30 from Pelotomaculum thermopropionicum (strain DSM 13744 / JCM 10971 / SI).